A 483-amino-acid chain; its full sequence is Alpha-tubulin N-acetyltransferase (483 aa).

Positions 1 to 186 (MEFRFNMHPL…NNFVVYEGFF (186 aa)) constitute an N-acetyltransferase domain. Residues 120-133 (FYVH…GLGR) and 156-165 (SEKLLGFLQK) contribute to the acetyl-CoA site. Disordered stretches follow at residues 204–231 (TASP…QTRT), 330–395 (ETLP…VLGS), and 437–472 (SVKI…GGGH). Positions 347–369 (YDFHPHHLELHDDTEGGGSHRDQ) are enriched in basic and acidic residues. Residues 370 to 383 (SLSPQSVSQQASPV) are compositionally biased toward low complexity.

The protein belongs to the acetyltransferase ATAT1 family.

It catalyses the reaction L-lysyl-[alpha-tubulin] + acetyl-CoA = N(6)-acetyl-L-lysyl-[alpha-tubulin] + CoA + H(+). In terms of biological role, specifically acetylates 'Lys-40' in alpha-tubulin on the lumenal side of microtubules. Promotes microtubule destabilization and accelerates microtubule dynamics; this activity may be independent of acetylation activity. Acetylates alpha-tubulin with a slow enzymatic rate, due to a catalytic site that is not optimized for acetyl transfer. Enters the microtubule through each end and diffuses quickly throughout the lumen of microtubules. Acetylates only long/old microtubules because of its slow acetylation rate since it does not have time to act on dynamically unstable microtubules before the enzyme is released. In Anopheles gambiae (African malaria mosquito), this protein is Alpha-tubulin N-acetyltransferase.